Here is a 138-residue protein sequence, read N- to C-terminus: Cysteine desulfuration protein SufE (138 aa).

The active-site Cysteine persulfide intermediate is the C51.

This sequence belongs to the SufE family. As to quaternary structure, homodimer. Interacts with SufS.

It localises to the cytoplasm. It participates in cofactor biosynthesis; iron-sulfur cluster biosynthesis. Its function is as follows. Participates in cysteine desulfuration mediated by SufS. Cysteine desulfuration mobilizes sulfur from L-cysteine to yield L-alanine and constitutes an essential step in sulfur metabolism for biosynthesis of a variety of sulfur-containing biomolecules. Functions as a sulfur acceptor for SufS, by mediating the direct transfer of the sulfur atom from the S-sulfanylcysteine of SufS, an intermediate product of cysteine desulfuration process. In Shigella boydii serotype 18 (strain CDC 3083-94 / BS512), this protein is Cysteine desulfuration protein SufE.